Reading from the N-terminus, the 36-residue chain is Photosystem I reaction center subunit VIII (36 aa).

The helical transmembrane segment at 10 to 30 (FVPLVGLVFSAIIMVLSFLYI) threads the bilayer.

It belongs to the PsaI family.

The protein resides in the plastid. Its subcellular location is the chloroplast thylakoid membrane. May help in the organization of the PsaL subunit. The chain is Photosystem I reaction center subunit VIII from Welwitschia mirabilis (Tree tumbo).